Here is a 297-residue protein sequence, read N- to C-terminus: Transmembrane protein 169 (297 aa).

The tract at residues 1–88 is disordered; the sequence is MEESAPVESQ…EGEDFLDYPG (88 aa). The Extracellular segment spans residues 1–159; the sequence is MEESAPVESQ…CQVGADQGPH (159 aa). A compositionally biased stretch (low complexity) spans 22–31; it reads RRAVAAVLAL. Acidic residues-rich tracts occupy residues 61–70 and 78–88; these read KTDEEPEESE and EEGEDFLDYPG. The helical transmembrane segment at 160 to 180 threads the bilayer; the sequence is VVLWTLVCLPVVFVLSFVVSF. Topologically, residues 181–210 are cytoplasmic; sequence YYGTITWYNIFLVYNEERTFWHKISCCPCL. The helical transmembrane segment at 211–231 threads the bilayer; it reads ILFYPVLIMTMASSLGLYAAV. The Extracellular portion of the chain corresponds to 232 to 297; the sequence is AQLSWSWAAW…PIQEVETSTV (66 aa).

It localises to the membrane. In Mus musculus (Mouse), this protein is Transmembrane protein 169 (Tmem169).